A 116-amino-acid chain; its full sequence is NADH-ubiquinone oxidoreductase chain 3 (116 aa).

The next 3 helical transmembrane spans lie at 3 to 23 (LITT…TISF), 56 to 76 (FFLI…LLPL), and 87 to 107 (LTLI…IYEW).

Belongs to the complex I subunit 3 family.

It localises to the mitochondrion membrane. It carries out the reaction a ubiquinone + NADH + 5 H(+)(in) = a ubiquinol + NAD(+) + 4 H(+)(out). Functionally, core subunit of the mitochondrial membrane respiratory chain NADH dehydrogenase (Complex I) that is believed to belong to the minimal assembly required for catalysis. Complex I functions in the transfer of electrons from NADH to the respiratory chain. The immediate electron acceptor for the enzyme is believed to be ubiquinone. The chain is NADH-ubiquinone oxidoreductase chain 3 (MT-ND3) from Oncorhynchus tshawytscha (Chinook salmon).